Reading from the N-terminus, the 235-residue chain is 2-C-methyl-D-erythritol 4-phosphate cytidylyltransferase (235 aa).

The protein belongs to the IspD/TarI cytidylyltransferase family. IspD subfamily.

It catalyses the reaction 2-C-methyl-D-erythritol 4-phosphate + CTP + H(+) = 4-CDP-2-C-methyl-D-erythritol + diphosphate. It functions in the pathway isoprenoid biosynthesis; isopentenyl diphosphate biosynthesis via DXP pathway; isopentenyl diphosphate from 1-deoxy-D-xylulose 5-phosphate: step 2/6. In terms of biological role, catalyzes the formation of 4-diphosphocytidyl-2-C-methyl-D-erythritol from CTP and 2-C-methyl-D-erythritol 4-phosphate (MEP). The protein is 2-C-methyl-D-erythritol 4-phosphate cytidylyltransferase of Synechococcus sp. (strain JA-3-3Ab) (Cyanobacteria bacterium Yellowstone A-Prime).